A 328-amino-acid polypeptide reads, in one-letter code: P2Y purinoceptor 3 (328 aa).

The Extracellular portion of the chain corresponds to 1–22 (MSMANFTAGRNSCTFQEEFKQV). An N-linked (GlcNAc...) asparagine glycan is attached at Asn5. A helical membrane pass occupies residues 23–43 (LLPLVYSVVFLLGLPLNAVVI). Over 44-57 (GQIWLARKALTRTT) the chain is Cytoplasmic. The chain crosses the membrane as a helical span at residues 58–78 (IYMLNLATADLLYVCSLPLLI). Topologically, residues 79–96 (YNYTQKDYWPFGDFTCKF) are extracellular. A disulfide bond links Cys94 and Cys172. Residues 97–117 (VRFQFYTNLHGSILFLTCISV) traverse the membrane as a helical segment. Residues 118-139 (QRYMGICHPLASWHKKKGKKLT) lie on the Cytoplasmic side of the membrane. Residues 140 to 160 (WLVCAAVWFIVIAQCLPTFVF) form a helical membrane-spanning segment. The Extracellular segment spans residues 161-189 (ASTGTQRNRTVCYDLSPPDRSASYFPYGI). The helical transmembrane segment at 190–210 (TLTITGFLLPFAAILACYCSM) threads the bilayer. Over 211-231 (ARILCQKDELIGLAVHKKKDK) the chain is Cytoplasmic. Residues 232–252 (AVRMIIIVVIVFSISFFPFHL) form a helical membrane-spanning segment. At 253–275 (TKTIYLIVRSSPTLPCPTLQAFA) the chain is on the extracellular side. The helical transmembrane segment at 276-298 (IAYKCTRPFASMNSVLDPILFYF) threads the bilayer. Over 299-323 (TQRKFRESTRYLLDKMSSKWRHDHC) the chain is Cytoplasmic.

The protein belongs to the G-protein coupled receptor 1 family.

The protein resides in the cell membrane. Functionally, receptor for extracellular UDP &gt; ADP = UTP. The activity of this receptor is mediated by G proteins which activate a phosphatidylinositol-calcium second messenger system. The protein is P2Y purinoceptor 3 (P2RY3) of Meleagris gallopavo (Wild turkey).